Here is a 328-residue protein sequence, read N- to C-terminus: MPLHNLTRFPRLEFIGAPTPLEYLPRFSDYLGREIFIKRDDVTPMAMGGNKLRKLEFLAADALREGADTLITAGVIQSNHVRQTAAVAAKLGLHCVALLENPIGTTAENYLTNGNRLLLDLFNTQIEMCEALTDPNAQLEELATRVEAQGFRPYVIPVGGSNALGALGYVESALEIAQQCEGAVNISSVVVASGSAGTHAGLAVGLEHLMPESELIGVTVSRSVADQLPKVVNLQQAIAKELELTASAEIILWDDYFAPGYGVPNDEGMEAVKLLARLEGILLDPVYTGKAMAGLIGCISQKRFKDEGPILFIHTGGAPALFAYHPHV.

K51 carries the post-translational modification N6-(pyridoxal phosphate)lysine.

The protein belongs to the ACC deaminase/D-cysteine desulfhydrase family. Homodimer. Requires pyridoxal 5'-phosphate as cofactor.

It catalyses the reaction D-cysteine + H2O = hydrogen sulfide + pyruvate + NH4(+) + H(+). In terms of biological role, catalyzes the alpha,beta-elimination reaction of D-cysteine and of several D-cysteine derivatives. It could be a defense mechanism against D-cysteine. This is D-cysteine desulfhydrase from Shigella sonnei (strain Ss046).